The chain runs to 928 residues: Arf guanine nucleotide exchange factor sec74 (928 aa).

Polar residues-rich tracts occupy residues 1–12 (MDESSRIASSSA) and 57–83 (TITS…STTD). 2 disordered regions span residues 1-152 (MDES…RPSS) and 227-249 (SLSS…EDFG). S67 bears the Phosphoserine mark. Composition is skewed to low complexity over residues 89-102 (GHSS…KVSS) and 115-132 (SKSS…TSSS). In terms of domain architecture, SEC7 spans 228–420 (LSSNFSARTP…ECFYDNITYT (193 aa)). The span at 234-245 (ARTPASNQSSVS) shows a compositional bias: polar residues. The PH domain occupies 548–677 (KVFKLGILIQ…WLVKINFVST (130 aa)).

The protein localises to the cytoplasm. It is found in the cell tip. Guanine nucleotide exchange factor for Arf GTPases, stimulating the nucleotide exchange from the GDP-bound to the GTP-bound form. Involved in vesicular transport. The chain is Arf guanine nucleotide exchange factor sec74 (sec74) from Schizosaccharomyces pombe (strain 972 / ATCC 24843) (Fission yeast).